A 464-amino-acid chain; its full sequence is Methylenetetrahydrofolate--tRNA-(uracil-5-)-methyltransferase TrmFO (464 aa).

13-18 provides a ligand contact to FAD; it reads GGGLAG.

The protein belongs to the MnmG family. TrmFO subfamily. It depends on FAD as a cofactor.

The protein resides in the cytoplasm. The catalysed reaction is uridine(54) in tRNA + (6R)-5,10-methylene-5,6,7,8-tetrahydrofolate + NADH + H(+) = 5-methyluridine(54) in tRNA + (6S)-5,6,7,8-tetrahydrofolate + NAD(+). It carries out the reaction uridine(54) in tRNA + (6R)-5,10-methylene-5,6,7,8-tetrahydrofolate + NADPH + H(+) = 5-methyluridine(54) in tRNA + (6S)-5,6,7,8-tetrahydrofolate + NADP(+). Functionally, catalyzes the folate-dependent formation of 5-methyl-uridine at position 54 (M-5-U54) in all tRNAs. The polypeptide is Methylenetetrahydrofolate--tRNA-(uracil-5-)-methyltransferase TrmFO (Bartonella bacilliformis (strain ATCC 35685 / KC583 / Herrer 020/F12,63)).